A 364-amino-acid polypeptide reads, in one-letter code: Medium-wave-sensitive opsin 1 (364 aa).

Residues 1 to 24 (MAQRWDPQRLAGGQPQDSHEDSTQ) are disordered. The Extracellular segment spans residues 1-52 (MAQRWDPQRLAGGQPQDSHEDSTQSSIFTYTNSNATRGPFEGPNYHIAPRWV). The required for 11-cis-retinal regeneration stretch occupies residues 17–43 (DSHEDSTQSSIFTYTNSNATRGPFEGP). An N-linked (GlcNAc...) asparagine glycan is attached at Asn34. The chain crosses the membrane as a helical span at residues 53-77 (YHITSTWMIIVVIASVFTNGLVLVA). Over 78 to 89 (TMKFKKLRHPLN) the chain is Cytoplasmic. Residues 90 to 115 (WILVNLAIADLAETVIASTISVVNQL) traverse the membrane as a helical segment. Over 116 to 129 (YGYFVLGHPLCVVE) the chain is Extracellular. Cysteines 126 and 203 form a disulfide. The chain crosses the membrane as a helical span at residues 130–149 (GYTVSVCGITGLWSLAIISW). Residues 150–168 (ERWLVVCKPFGNMRFDAKL) lie on the Cytoplasmic side of the membrane. Residues 169–192 (AIVGIAFSWIWSAVWTAPPIFGWS) traverse the membrane as a helical segment. The Extracellular portion of the chain corresponds to 193–218 (RYWPYGLKTSCGPDVFSGTSYPGVQS). A helical membrane pass occupies residues 219–246 (YMMVLMVTCCIIPLSIIILCYLQVWLAI). Residues 247–268 (RAVAKQQKESESTQKAEKEVTR) lie on the Cytoplasmic side of the membrane. A helical membrane pass occupies residues 269-292 (MVVVMVFAYCLCWGPYTFFACFAT). Residues 293–300 (ANPGYAFH) lie on the Extracellular side of the membrane. The chain crosses the membrane as a helical span at residues 301-320 (PLVAALPAYFAKSATIYNPI). N6-(retinylidene)lysine is present on Lys312. The Cytoplasmic segment spans residues 321-364 (IYVFMNRQFRNCILQLFGKKVDDTSELSSASKTEASSVSSVSPA).

Belongs to the G-protein coupled receptor 1 family. Opsin subfamily. Monomer. Homodimer. Homotetramer. In terms of processing, O-glycosylated. Post-translationally, phosphorylated on some or all of the serine and threonine residues present in the C-terminal region. Expressed in cone photoreceptor cells.

Its subcellular location is the membrane. Its function is as follows. Visual pigments are the light-absorbing molecules that mediate vision. They consist of an apoprotein, opsin, covalently linked to cis-retinal. May increase spectral sensitivity in dim light. In Sciurus carolinensis (Eastern gray squirrel), this protein is Medium-wave-sensitive opsin 1 (OPN1MW).